A 501-amino-acid polypeptide reads, in one-letter code: Pentatricopeptide repeat-containing protein At2g36730 (501 aa).

PPR repeat units follow at residues 77 to 111 (TPST…GIKP), 112 to 146 (NKLT…GFDF), 147 to 177 (DVYV…MTER), 178 to 212 (NVVS…RFCP), 213 to 243 (DETT…VREL), 246 to 276 (NCRL…MVDK), 277 to 312 (NVWT…SVRP), 313 to 343 (NYVT…MEKI), and 349 to 379 (MMIH…MPFE). The segment at 384–462 (VWRTLLSACS…IAGESCLELG (79 aa)) is type E motif. Residues 463-493 (GSFHRFFSGYDPRSEYVSIYELLDLFKFQLT) form a type E(+) motif region.

This sequence belongs to the PPR family. PCMP-E subfamily.

This Arabidopsis thaliana (Mouse-ear cress) protein is Pentatricopeptide repeat-containing protein At2g36730 (PCMP-E44).